A 276-amino-acid chain; its full sequence is 3-methyl-2-oxobutanoate hydroxymethyltransferase (276 aa).

Asp-45 and Asp-84 together coordinate Mg(2+). 3-methyl-2-oxobutanoate is bound by residues 45-46 (DS), Asp-84, and Lys-114. Glu-116 lines the Mg(2+) pocket. The active-site Proton acceptor is Glu-183.

It belongs to the PanB family. In terms of assembly, homodecamer; pentamer of dimers. Mg(2+) is required as a cofactor.

It localises to the cytoplasm. The enzyme catalyses 3-methyl-2-oxobutanoate + (6R)-5,10-methylene-5,6,7,8-tetrahydrofolate + H2O = 2-dehydropantoate + (6S)-5,6,7,8-tetrahydrofolate. Its pathway is cofactor biosynthesis; (R)-pantothenate biosynthesis; (R)-pantoate from 3-methyl-2-oxobutanoate: step 1/2. Functionally, catalyzes the reversible reaction in which hydroxymethyl group from 5,10-methylenetetrahydrofolate is transferred onto alpha-ketoisovalerate to form ketopantoate. The polypeptide is 3-methyl-2-oxobutanoate hydroxymethyltransferase (Carboxydothermus hydrogenoformans (strain ATCC BAA-161 / DSM 6008 / Z-2901)).